Consider the following 293-residue polypeptide: Bifunctional protein FolD (293 aa).

Residues 162 to 164 (GQS) and isoleucine 227 contribute to the NADP(+) site.

This sequence belongs to the tetrahydrofolate dehydrogenase/cyclohydrolase family. Homodimer.

The enzyme catalyses (6R)-5,10-methylene-5,6,7,8-tetrahydrofolate + NADP(+) = (6R)-5,10-methenyltetrahydrofolate + NADPH. It catalyses the reaction (6R)-5,10-methenyltetrahydrofolate + H2O = (6R)-10-formyltetrahydrofolate + H(+). It functions in the pathway one-carbon metabolism; tetrahydrofolate interconversion. Functionally, catalyzes the oxidation of 5,10-methylenetetrahydrofolate to 5,10-methenyltetrahydrofolate and then the hydrolysis of 5,10-methenyltetrahydrofolate to 10-formyltetrahydrofolate. This Metamycoplasma arthritidis (strain 158L3-1) (Mycoplasma arthritidis) protein is Bifunctional protein FolD.